Reading from the N-terminus, the 154-residue chain is Large ribosomal subunit protein uL13 (154 aa).

The protein belongs to the universal ribosomal protein uL13 family. As to quaternary structure, part of the 50S ribosomal subunit.

Functionally, this protein is one of the early assembly proteins of the 50S ribosomal subunit, although it is not seen to bind rRNA by itself. It is important during the early stages of 50S assembly. The chain is Large ribosomal subunit protein uL13 from Bartonella henselae (strain ATCC 49882 / DSM 28221 / CCUG 30454 / Houston 1) (Rochalimaea henselae).